The following is a 902-amino-acid chain: 4-hydroxyphenylacetate decarboxylase glycyl radical subunit (902 aa).

The PFL domain maps to Lys-38–Leu-774. The 4-hydroxyphenylacetate site is built by Ser-348 and Cys-507. The active-site Cysteine radical intermediate is the Cys-507. The Proton donor role is filled by Glu-509. Positions 540 and 641 each coordinate 4-hydroxyphenylacetate. One can recognise a Glycine radical domain in the interval Gly-782–Val-902. Gly-877 carries the glycine radical modification.

Belongs to the glycyl radical enzyme (GRE) family. HPAD subfamily. In terms of assembly, heterooctamer consisting of 4 large (HpdB) subunits and 4 small (HpdC) subunits, arranged as a tetramer of heterodimers. Also forms a catalytically inactive homodimer. Post-translationally, requires the activating protein CsdA to generate the key active site glycyl radical that is involved in catalysis. Phosphorylated on serine. Phosphorylation may trigger the formation of the active heterooctamers and thereby regulates enzyme activity.

It carries out the reaction 4-hydroxyphenylacetate + H(+) = 4-methylphenol + CO2. It catalyses the reaction 3,4-dihydroxyphenylacetate + H(+) = 4-methylcatechol + CO2. Glycyl radical subunit of the HPA decarboxylase that decarboxylates phenylacetates with a hydroxyl group in the p-position. Active toward 4-hydroxyphenylacetate and 3,4-dihydroxyphenylacetate, forming 4-methylphenol and 4-methylcatechol, respectively. Is likely involved in the catabolism of aromatic amino acids such as tyrosine fermentation. 4-methylphenol (p-cresol) formation provides metabolic toxicity, which allows an active suppression of other microbes and may provide growth advantages for the producers in highly competitive environments. The large subunit is the catalytic subunit that binds the substrate. This is 4-hydroxyphenylacetate decarboxylase glycyl radical subunit from Clostridioides difficile (strain 630) (Peptoclostridium difficile).